A 197-amino-acid polypeptide reads, in one-letter code: Protein GrpE (197 aa).

Residues 1 to 27 are compositionally biased toward basic and acidic residues; the sequence is MSNKEQHIEKEEQLQEEKHEEQQKTEE. The disordered stretch occupies residues 1–34; it reads MSNKEQHIEKEEQLQEEKHEEQQKTEETEVEAVN.

It belongs to the GrpE family. In terms of assembly, homodimer.

It localises to the cytoplasm. Participates actively in the response to hyperosmotic and heat shock by preventing the aggregation of stress-denatured proteins, in association with DnaK and GrpE. It is the nucleotide exchange factor for DnaK and may function as a thermosensor. Unfolded proteins bind initially to DnaJ; upon interaction with the DnaJ-bound protein, DnaK hydrolyzes its bound ATP, resulting in the formation of a stable complex. GrpE releases ADP from DnaK; ATP binding to DnaK triggers the release of the substrate protein, thus completing the reaction cycle. Several rounds of ATP-dependent interactions between DnaJ, DnaK and GrpE are required for fully efficient folding. The protein is Protein GrpE of Pasteurella multocida (strain Pm70).